We begin with the raw amino-acid sequence, 107 residues long: UPF0145 protein Memar_1285 (107 aa).

The protein belongs to the UPF0145 family.

The sequence is that of UPF0145 protein Memar_1285 from Methanoculleus marisnigri (strain ATCC 35101 / DSM 1498 / JR1).